The chain runs to 340 residues: Ketol-acid reductoisomerase (NADP(+)) (340 aa).

One can recognise a KARI N-terminal Rossmann domain in the interval 2 to 181 (AKVFYNGDIN…GSARAGVIET (180 aa)). NADP(+)-binding positions include 25-28 (YGSQ), Arg48, Ser52, and 82-85 (DEHQ). His107 is an active-site residue. Gly133 provides a ligand contact to NADP(+). Residues 182-327 (TFQEETETDL…RELREMMPFV (146 aa)) enclose the KARI C-terminal knotted domain. Residues Asp190, Glu194, Glu226, and Glu230 each contribute to the Mg(2+) site. Ser251 is a substrate binding site.

It belongs to the ketol-acid reductoisomerase family. The cofactor is Mg(2+).

It carries out the reaction (2R)-2,3-dihydroxy-3-methylbutanoate + NADP(+) = (2S)-2-acetolactate + NADPH + H(+). The enzyme catalyses (2R,3R)-2,3-dihydroxy-3-methylpentanoate + NADP(+) = (S)-2-ethyl-2-hydroxy-3-oxobutanoate + NADPH + H(+). It participates in amino-acid biosynthesis; L-isoleucine biosynthesis; L-isoleucine from 2-oxobutanoate: step 2/4. Its pathway is amino-acid biosynthesis; L-valine biosynthesis; L-valine from pyruvate: step 2/4. In terms of biological role, involved in the biosynthesis of branched-chain amino acids (BCAA). Catalyzes an alkyl-migration followed by a ketol-acid reduction of (S)-2-acetolactate (S2AL) to yield (R)-2,3-dihydroxy-isovalerate. In the isomerase reaction, S2AL is rearranged via a Mg-dependent methyl migration to produce 3-hydroxy-3-methyl-2-ketobutyrate (HMKB). In the reductase reaction, this 2-ketoacid undergoes a metal-dependent reduction by NADPH to yield (R)-2,3-dihydroxy-isovalerate. The polypeptide is Ketol-acid reductoisomerase (NADP(+)) (Halalkalibacterium halodurans (strain ATCC BAA-125 / DSM 18197 / FERM 7344 / JCM 9153 / C-125) (Bacillus halodurans)).